The sequence spans 91 residues: DNA-directed RNA polymerase subunit Rpo11 (91 aa).

Belongs to the archaeal Rpo11/eukaryotic RPB11/RPC19 RNA polymerase subunit family. Part of the RNA polymerase complex.

The protein resides in the cytoplasm. The catalysed reaction is RNA(n) + a ribonucleoside 5'-triphosphate = RNA(n+1) + diphosphate. In terms of biological role, DNA-dependent RNA polymerase (RNAP) catalyzes the transcription of DNA into RNA using the four ribonucleoside triphosphates as substrates. In Methanothrix thermoacetophila (strain DSM 6194 / JCM 14653 / NBRC 101360 / PT) (Methanosaeta thermophila), this protein is DNA-directed RNA polymerase subunit Rpo11.